A 240-amino-acid polypeptide reads, in one-letter code: 1-(5-phosphoribosyl)-5-[(5-phosphoribosylamino)methylideneamino] imidazole-4-carboxamide isomerase (240 aa).

The active-site Proton acceptor is the D10. D131 acts as the Proton donor in catalysis.

This sequence belongs to the HisA/HisF family.

It localises to the cytoplasm. The enzyme catalyses 1-(5-phospho-beta-D-ribosyl)-5-[(5-phospho-beta-D-ribosylamino)methylideneamino]imidazole-4-carboxamide = 5-[(5-phospho-1-deoxy-D-ribulos-1-ylimino)methylamino]-1-(5-phospho-beta-D-ribosyl)imidazole-4-carboxamide. It participates in amino-acid biosynthesis; L-histidine biosynthesis; L-histidine from 5-phospho-alpha-D-ribose 1-diphosphate: step 4/9. The chain is 1-(5-phosphoribosyl)-5-[(5-phosphoribosylamino)methylideneamino] imidazole-4-carboxamide isomerase from Shouchella clausii (strain KSM-K16) (Alkalihalobacillus clausii).